Consider the following 204-residue polypeptide: Small ribosomal subunit protein uS4 (204 aa).

The 65-residue stretch at 92–156 (RRLDALVLRS…SKVPFQVARE (65 aa)) folds into the S4 RNA-binding domain.

The protein belongs to the universal ribosomal protein uS4 family. In terms of assembly, part of the 30S ribosomal subunit. Contacts protein S5. The interaction surface between S4 and S5 is involved in control of translational fidelity.

One of the primary rRNA binding proteins, it binds directly to 16S rRNA where it nucleates assembly of the body of the 30S subunit. In terms of biological role, with S5 and S12 plays an important role in translational accuracy. This Streptomyces griseus subsp. griseus (strain JCM 4626 / CBS 651.72 / NBRC 13350 / KCC S-0626 / ISP 5235) protein is Small ribosomal subunit protein uS4.